A 369-amino-acid chain; its full sequence is Anhydro-N-acetylmuramic acid kinase (369 aa).

12–19 (GTSMDGVD) serves as a coordination point for ATP.

This sequence belongs to the anhydro-N-acetylmuramic acid kinase family.

It carries out the reaction 1,6-anhydro-N-acetyl-beta-muramate + ATP + H2O = N-acetyl-D-muramate 6-phosphate + ADP + H(+). It participates in amino-sugar metabolism; 1,6-anhydro-N-acetylmuramate degradation. It functions in the pathway cell wall biogenesis; peptidoglycan recycling. Its function is as follows. Catalyzes the specific phosphorylation of 1,6-anhydro-N-acetylmuramic acid (anhMurNAc) with the simultaneous cleavage of the 1,6-anhydro ring, generating MurNAc-6-P. Is required for the utilization of anhMurNAc either imported from the medium or derived from its own cell wall murein, and thus plays a role in cell wall recycling. In Shewanella amazonensis (strain ATCC BAA-1098 / SB2B), this protein is Anhydro-N-acetylmuramic acid kinase.